Reading from the N-terminus, the 260-residue chain is Small ribosomal subunit protein eS1 (260 aa).

Basic residues predominate over residues 1-18; sequence MAVGKNKRMSKGKKGGKK. Residues 1–20 are disordered; sequence MAVGKNKRMSKGKKGGKKKA.

The protein belongs to the eukaryotic ribosomal protein eS1 family. As to quaternary structure, component of the small ribosomal subunit. Mature ribosomes consist of a small (40S) and a large (60S) subunit. The 40S subunit contains about 33 different proteins and 1 molecule of RNA (18S). The 60S subunit contains about 49 different proteins and 3 molecules of RNA (25S, 5.8S and 5S).

The protein localises to the cytoplasm. In Ostreococcus lucimarinus (strain CCE9901), this protein is Small ribosomal subunit protein eS1.